A 661-amino-acid polypeptide reads, in one-letter code: MDGLVAQCSARLLQQEKEIKSLTAEIDRLKNCGHLEDSPSLDQLREENLKLKYRLNILQRSLQAEKRRRPTKNMININSRLQDVFGCAIKAAYPDLDNPPLVVTPSQQPKFGDYQCNSAMGISQMLKAKEQKVNPRGIAENITKHLPNNEYIDRVEIAGPGFINVHLRKDFVSEQLTNLLVNGIQLPALGENKKVIVDFSSPNIAKEMHVGHLRSTIIGESMSRLFEFAGYDVLRLNHVGDWGTQFGMLIAHLQDQFPDYLTVSPPIGDLQAFYKESKKRFDTEEEFKKRAYQCVVSLQSKDPDFIKAWNLICDVSRAEFNKIYDALDITLIERGESFYQDRMKDIVKEFEDKGYVQVDDGRKIVFVPGCSIPLTIVKSDGGFTYDTSDLAAIKQRLFEEKANKIIYVVDNGQAVHFQTIFAAAQMIGWYDPKVTQVTHVGFGVVLGEDKKKFKTRSGETVRLVDLLGEGLKRSMDKLKEKERDKVLTEEELTAAQTSIAYGCIKYADLSHNRLNDYIFSFDKMLDDRGNTAAYLLYAFTRIRSIARLANVDEEMLQKAARETKIVLDHEKEWKLGRCILRFPEILQKMLDDLFLHTLCDYIYELATTFTEFYDSCYCVEKDRQTGKVLKVNMWRMLLCEAVAAVMAKGFDILGIKPVQRM.

At methionine 1 the chain carries N-acetylmethionine. The segment at methionine 1 to asparagine 73 is could be involved in the assembly of the multisynthetase complex. L-arginine is bound by residues serine 201–asparagine 203, histidine 212, tyrosine 385, aspartate 389, and glutamine 413. The 'HIGH' region signature appears at proline 202–leucine 213. The tract at residues asparagine 530–serine 544 is interaction with tRNA.

The protein belongs to the class-I aminoacyl-tRNA synthetase family. As to quaternary structure, interacts (via N-terminus) with AIMP1 (via N-terminus); this stimulates its catalytic activity. Interacts (via N-terminus) with LARS2 (via C-terminus). Monomer. Part of a multisubunit complex that groups tRNA ligases for Arg (RARS1), Asp (DARS1), Gln (QARS1), Ile (IARS1), Leu (LARS1), Lys (KARS1), Met (MARS1) the bifunctional ligase for Glu and Pro (EPRS1) and the auxiliary subunits AIMP1/p43, AIMP2/p38 and EEF1E1/p18. Interacts with QARS1. Part of a complex composed of RARS1, QARS1 and AIMP1.

Its subcellular location is the cytoplasm. The protein localises to the cytosol. The catalysed reaction is tRNA(Arg) + L-arginine + ATP = L-arginyl-tRNA(Arg) + AMP + diphosphate. Functionally, forms part of a macromolecular complex that catalyzes the attachment of specific amino acids to cognate tRNAs during protein synthesis. Modulates the secretion of AIMP1 and may be involved in generation of the inflammatory cytokine EMAP2 from AIMP1. The polypeptide is Arginine--tRNA ligase, cytoplasmic (RARS1) (Cricetulus griseus (Chinese hamster)).